We begin with the raw amino-acid sequence, 183 residues long: Secreted RxLR effector protein 41 (183 aa).

The first 18 residues, 1–18 (MLGFVTGVLAISAHVIVS), serve as a signal peptide directing secretion. The RxLR-dEER signature appears at 41–65 (RRLRSYETDTASARAEEGTSDIEER). N-linked (GlcNAc...) asparagine glycosylation is present at Asn-88.

It belongs to the RxLR effector family.

Its subcellular location is the secreted. The protein localises to the host nucleus. It is found in the host cytoplasm. Its function is as follows. Secreted effector that dos not suppress the host cell death induced by cell death-inducing proteins. In Plasmopara viticola (Downy mildew of grapevine), this protein is Secreted RxLR effector protein 41.